A 332-amino-acid polypeptide reads, in one-letter code: GTP 3',8-cyclase (332 aa).

Residues 7–221 (QYERLHDYVR…FDLCKQAGLD (215 aa)) enclose the Radical SAM core domain. GTP is bound at residue Arg16. Residues Cys23 and Cys27 each coordinate [4Fe-4S] cluster. Tyr29 is a binding site for S-adenosyl-L-methionine. Residue Cys30 participates in [4Fe-4S] cluster binding. Arg66 serves as a coordination point for GTP. Gly70 lines the S-adenosyl-L-methionine pocket. Thr97 lines the GTP pocket. Ser121 contacts S-adenosyl-L-methionine. Lys158 provides a ligand contact to GTP. Residue Met192 coordinates S-adenosyl-L-methionine. [4Fe-4S] cluster-binding residues include Cys256 and Cys259. GTP is bound at residue 261 to 263 (RLR). Position 273 (Cys273) interacts with [4Fe-4S] cluster.

Belongs to the radical SAM superfamily. MoaA family. Monomer and homodimer. [4Fe-4S] cluster is required as a cofactor.

The catalysed reaction is GTP + AH2 + S-adenosyl-L-methionine = (8S)-3',8-cyclo-7,8-dihydroguanosine 5'-triphosphate + 5'-deoxyadenosine + L-methionine + A + H(+). The protein operates within cofactor biosynthesis; molybdopterin biosynthesis. Its function is as follows. Catalyzes the cyclization of GTP to (8S)-3',8-cyclo-7,8-dihydroguanosine 5'-triphosphate. The sequence is that of GTP 3',8-cyclase from Limosilactobacillus fermentum (strain NBRC 3956 / LMG 18251) (Lactobacillus fermentum).